The following is a 997-amino-acid chain: Translation initiation factor IF-2 (997 aa).

Positions 101 to 409 (ELAAEQAAAR…QHQDRRHEQV (309 aa)) are disordered. Composition is skewed to low complexity over residues 116–185 (AEAV…QAEP), 195–208 (AAPAQAVAEPVEPA), and 244–280 (PSAPAESPKSAKAEPAAAPKTTAKPGEIRRAAAPAAP). Over residues 281–292 (DRAREEARRAAE) the composition is skewed to basic and acidic residues. A compositionally biased stretch (gly residues) spans 385 to 394 (RAGGKGGRGG). A compositionally biased stretch (basic and acidic residues) spans 400–409 (QHQDRRHEQV). Residues 498–665 (PRAPVVTVMG…NVLLQAEILE (168 aa)) enclose the tr-type G domain. Residues 507–514 (GHVDHGKT) are G1. 507 to 514 (GHVDHGKT) is a binding site for GTP. Positions 532–536 (GITQH) are G2. The interval 553-556 (DTPG) is G3. Residues 553-557 (DTPGH) and 607-610 (NKID) contribute to the GTP site. The G4 stretch occupies residues 607–610 (NKID). Positions 643–645 (SAK) are G5.

This sequence belongs to the TRAFAC class translation factor GTPase superfamily. Classic translation factor GTPase family. IF-2 subfamily.

The protein localises to the cytoplasm. Its function is as follows. One of the essential components for the initiation of protein synthesis. Protects formylmethionyl-tRNA from spontaneous hydrolysis and promotes its binding to the 30S ribosomal subunits. Also involved in the hydrolysis of GTP during the formation of the 70S ribosomal complex. The chain is Translation initiation factor IF-2 from Bordetella bronchiseptica (strain ATCC BAA-588 / NCTC 13252 / RB50) (Alcaligenes bronchisepticus).